The sequence spans 500 residues: NAD(P)H-quinone oxidoreductase chain 4, chloroplastic (500 aa).

15 helical membrane passes run 4–24, 37–57, 87–107, 113–130, 134–154, 167–187, 207–227, 242–262, 272–292, 305–325, 330–350, 364–384, 386–406, 417–437, and 463–483; these read FPWL…LFFF, ICIC…HFEL, IGPI…AWPV, LFYF…GSFS, LLLF…LLSM, FILY…GIGL, IALE…KSPI, HYST…YGLV, AHSI…IYAA, IAYS…SISD, GAIL…FLAG, MGGL…LSMA, LALP…GIIT, VITL…LSML, and FVAI…DFVF.

Belongs to the complex I subunit 4 family.

The protein resides in the plastid. It localises to the chloroplast thylakoid membrane. It carries out the reaction a plastoquinone + NADH + (n+1) H(+)(in) = a plastoquinol + NAD(+) + n H(+)(out). The enzyme catalyses a plastoquinone + NADPH + (n+1) H(+)(in) = a plastoquinol + NADP(+) + n H(+)(out). This is NAD(P)H-quinone oxidoreductase chain 4, chloroplastic from Cucumis sativus (Cucumber).